An 84-amino-acid polypeptide reads, in one-letter code: RNA-binding protein Hfq (84 aa).

One can recognise a Sm domain in the interval 11–71; it reads DTFLNHVRKN…ISTIMPGHPV (61 aa).

It belongs to the Hfq family. In terms of assembly, homohexamer.

RNA chaperone that binds small regulatory RNA (sRNAs) and mRNAs to facilitate mRNA translational regulation in response to envelope stress, environmental stress and changes in metabolite concentrations. Also binds with high specificity to tRNAs. This is RNA-binding protein Hfq from Methylorubrum populi (strain ATCC BAA-705 / NCIMB 13946 / BJ001) (Methylobacterium populi).